A 230-amino-acid chain; its full sequence is Lactate utilization protein C (230 aa).

The protein belongs to the LutC/YkgG family.

Is involved in L-lactate degradation and allows cells to grow with lactate as the sole carbon source. This chain is Lactate utilization protein C, found in Exiguobacterium sp. (strain ATCC BAA-1283 / AT1b).